Here is a 646-residue protein sequence, read N- to C-terminus: Phosphomethylpyrimidine synthase (646 aa).

Substrate-binding positions include Asn-235, Met-264, Tyr-293, His-329, 349-351 (SRG), 390-393 (DGLR), and Glu-429. Residue His-433 participates in Zn(2+) binding. Tyr-456 is a substrate binding site. Residue His-497 participates in Zn(2+) binding. [4Fe-4S] cluster is bound by residues Cys-577, Cys-580, and Cys-585. The disordered stretch occupies residues 624 to 646 (KSEEFRATGSELYHPAVHAEADE).

This sequence belongs to the ThiC family. In terms of assembly, homodimer. It depends on [4Fe-4S] cluster as a cofactor.

The catalysed reaction is 5-amino-1-(5-phospho-beta-D-ribosyl)imidazole + S-adenosyl-L-methionine = 4-amino-2-methyl-5-(phosphooxymethyl)pyrimidine + CO + 5'-deoxyadenosine + formate + L-methionine + 3 H(+). It functions in the pathway cofactor biosynthesis; thiamine diphosphate biosynthesis. Its function is as follows. Catalyzes the synthesis of the hydroxymethylpyrimidine phosphate (HMP-P) moiety of thiamine from aminoimidazole ribotide (AIR) in a radical S-adenosyl-L-methionine (SAM)-dependent reaction. The sequence is that of Phosphomethylpyrimidine synthase from Vibrio parahaemolyticus serotype O3:K6 (strain RIMD 2210633).